The chain runs to 148 residues: UPF0134 protein MPN_204 (148 aa).

This sequence belongs to the UPF0134 family.

The chain is UPF0134 protein MPN_204 from Mycoplasma pneumoniae (strain ATCC 29342 / M129 / Subtype 1) (Mycoplasmoides pneumoniae).